Here is a 182-residue protein sequence, read N- to C-terminus: Lipid A acyltransferase PagP (182 aa).

Residues 1–21 (MTQYFRSLAFFLLPVPATAMA) form the signal peptide. The N-palmitoyl cysteine moiety is linked to residue Cys22. Cys22 carries S-diacylglycerol cysteine lipidation. Active-site residues include His55, Asp98, and Ser99.

The protein belongs to the lipid A palmitoyltransferase family. As to quaternary structure, homodimer.

It localises to the cell outer membrane. It catalyses the reaction a lipid A + a 1,2-diacyl-sn-glycero-3-phosphocholine = a hepta-acyl lipid A + a 2-acyl-sn-glycero-3-phosphocholine. The catalysed reaction is a lipid IVA + a 1,2-diacyl-sn-glycero-3-phosphocholine = a lipid IVB + a 2-acyl-sn-glycero-3-phosphocholine. It carries out the reaction a lipid IIA + a 1,2-diacyl-sn-glycero-3-phosphocholine = a lipid IIB + a 2-acyl-sn-glycero-3-phosphocholine. Transfers a fatty acid residue from the sn-1 position of a phospholipid to the N-linked hydroxyfatty acid chain on the proximal unit of lipid A or its precursors. This chain is Lipid A acyltransferase PagP, found in Bordetella pertussis (strain CS).